Consider the following 358-residue polypeptide: UDP-N-acetylglucosamine--N-acetylmuramyl-(pentapeptide) pyrophosphoryl-undecaprenol N-acetylglucosamine transferase (358 aa).

Residues 10 to 12 (TGG), Asn124, Arg165, Ser191, Ile246, and Gln291 contribute to the UDP-N-acetyl-alpha-D-glucosamine site.

The protein belongs to the glycosyltransferase 28 family. MurG subfamily.

Its subcellular location is the cell inner membrane. The enzyme catalyses di-trans,octa-cis-undecaprenyl diphospho-N-acetyl-alpha-D-muramoyl-L-alanyl-D-glutamyl-meso-2,6-diaminopimeloyl-D-alanyl-D-alanine + UDP-N-acetyl-alpha-D-glucosamine = di-trans,octa-cis-undecaprenyl diphospho-[N-acetyl-alpha-D-glucosaminyl-(1-&gt;4)]-N-acetyl-alpha-D-muramoyl-L-alanyl-D-glutamyl-meso-2,6-diaminopimeloyl-D-alanyl-D-alanine + UDP + H(+). It functions in the pathway cell wall biogenesis; peptidoglycan biosynthesis. Its function is as follows. Cell wall formation. Catalyzes the transfer of a GlcNAc subunit on undecaprenyl-pyrophosphoryl-MurNAc-pentapeptide (lipid intermediate I) to form undecaprenyl-pyrophosphoryl-MurNAc-(pentapeptide)GlcNAc (lipid intermediate II). The protein is UDP-N-acetylglucosamine--N-acetylmuramyl-(pentapeptide) pyrophosphoryl-undecaprenol N-acetylglucosamine transferase of Citrifermentans bemidjiense (strain ATCC BAA-1014 / DSM 16622 / JCM 12645 / Bem) (Geobacter bemidjiensis).